A 1158-amino-acid polypeptide reads, in one-letter code: ATP-dependent helicase/deoxyribonuclease subunit B (1158 aa).

It belongs to the helicase family. AddB/RexB type 2 subfamily. Heterodimer of AddA and RexB. Requires Mg(2+) as cofactor.

In terms of biological role, the heterodimer acts as both an ATP-dependent DNA helicase and an ATP-dependent, dual-direction single-stranded exonuclease. Recognizes the chi site generating a DNA molecule suitable for the initiation of homologous recombination. This subunit has 5' -&gt; 3' nuclease activity but not helicase activity. This is ATP-dependent helicase/deoxyribonuclease subunit B from Lactobacillus johnsonii (strain CNCM I-12250 / La1 / NCC 533).